We begin with the raw amino-acid sequence, 382 residues long: Flap endonuclease 1 (382 aa).

The N-domain stretch occupies residues Met1–Arg105. Asp34 provides a ligand contact to Mg(2+). DNA is bound by residues Arg47 and Arg71. Residues Asp87, Glu156, Glu158, Asp177, and Asp179 each contribute to the Mg(2+) site. The segment at Glu120–His251 is I-domain. A DNA-binding site is contributed by Glu156. Residues Gly229 and Asp231 each coordinate DNA. Asp231 serves as a coordination point for Mg(2+). Positions Ile339–Phe347 are interaction with PCNA. The disordered stretch occupies residues Ala358–Arg382. Residues Leu370–Arg382 are compositionally biased toward basic residues.

The protein belongs to the XPG/RAD2 endonuclease family. FEN1 subfamily. Interacts with PCNA. Three molecules of RAD27 bind to one PCNA trimer with each molecule binding to one PCNA monomer. PCNA stimulates the nuclease activity without altering cleavage specificity. It depends on Mg(2+) as a cofactor. Post-translationally, phosphorylated. Phosphorylation upon DNA damage induces relocalization to the nuclear plasma.

The protein resides in the nucleus. It localises to the nucleolus. Its subcellular location is the nucleoplasm. It is found in the mitochondrion. Structure-specific nuclease with 5'-flap endonuclease and 5'-3' exonuclease activities involved in DNA replication and repair. During DNA replication, cleaves the 5'-overhanging flap structure that is generated by displacement synthesis when DNA polymerase encounters the 5'-end of a downstream Okazaki fragment. It enters the flap from the 5'-end and then tracks to cleave the flap base, leaving a nick for ligation. Also involved in the long patch base excision repair (LP-BER) pathway, by cleaving within the apurinic/apyrimidinic (AP) site-terminated flap. Acts as a genome stabilization factor that prevents flaps from equilibrating into structures that lead to duplications and deletions. Also possesses 5'-3' exonuclease activity on nicked or gapped double-stranded DNA, and exhibits RNase H activity. Also involved in replication and repair of rDNA and in repairing mitochondrial DNA. This chain is Flap endonuclease 1, found in Saccharomyces cerevisiae (strain YJM789) (Baker's yeast).